The chain runs to 562 residues: Furostanol glycoside 26-O-beta-glucosidase (562 aa).

A chloroplast-targeting transit peptide spans 1–44 (MAAQLGLPLVSCHRGASQAASSSAHLVPGASAIMQAGNRRQKMR). A beta-D-glucoside is bound by residues Gln-110, His-214, and 259–260 (NE). The Proton donor role is filled by Glu-260. Residues Cys-279 and Cys-285 are joined by a disulfide bond. Residues Tyr-401, Glu-472, Trp-518, 525–526 (EW), and Phe-534 each bind a beta-D-glucoside. Catalysis depends on Glu-472, which acts as the Nucleophile.

It belongs to the glycosyl hydrolase 1 family. As to quaternary structure, heterodimer. The N-terminus of the larger subunit is blocked and the smaller subunit might be derived from the larger one.

It localises to the plastid. The protein resides in the chloroplast. It catalyses the reaction protodioscin + H2O = 26-deglucoprotodioscin + D-glucose. Partially inhibited by glucono-1,5-lactone, conduritol beta-epoxide and diosgenin, but not by beta-sitosterol or cholesterol. Functionally, beta-glucosidase involved in saponin metabolism. Highly specific for the cleavage of C-26-bound glucose moiety of furostanol glycosides such as protogracillin and protodioscin. No activity with nuatigenin glycoside. Convers furostanol glycosides to spirostanol glycosides. This Hellenia speciosa (Crepe ginger) protein is Furostanol glycoside 26-O-beta-glucosidase.